The chain runs to 715 residues: ATP-dependent DNA helicase Hel308 (715 aa).

Positions 8-36 (MPIEDLKLPSNVIEIIKKRGIKKLNPPQT) match the Q motif motif. Residues glutamine 35 and 53-60 (SPTGSGKT) contribute to the ATP site. In terms of domain architecture, Helicase ATP-binding spans 40-203 (KKGLLEGNRL…WLGAEPVATN (164 aa)). Residues 152 to 155 (DELH) carry the DEAH box motif. The region spanning 236 to 442 (HGDDAIIAYT…ERAFYTFLLG (207 aa)) is the Helicase C-terminal domain.

Belongs to the helicase family. Hel308 subfamily. Monomer.

The enzyme catalyses Couples ATP hydrolysis with the unwinding of duplex DNA by translocating in the 3'-5' direction.. It catalyses the reaction ATP + H2O = ADP + phosphate + H(+). Functionally, DNA-dependent ATPase and 3'-5' DNA helicase that may be involved in repair of stalled replication forks. A low processivity 3'-5' helicase. Unwinds short dsDNA substrates with 3'-overhangs (25 bp dsDNA with 25 base overhang), less active on longer dsDNA substrates. Also unwinds the lagging strand of a stalled replication fork (but the leading strand was not tested). Binds ssDNA, but dsDNA about 35-fold less well. Able to displace streptavidin from biotinylated ssDNA, which is partially inhibited by DNA-binding proteins, suggesting it may play a role in stripping proteins from stalled replication forks. The sequence is that of ATP-dependent DNA helicase Hel308 from Saccharolobus solfataricus (strain 98/2) (Sulfolobus solfataricus).